The primary structure comprises 219 residues: Sugar transporter SWEET1 (219 aa).

A run of 7 helical transmembrane segments spans residues 3 to 23, 38 to 58, 63 to 83, 98 to 118, 125 to 145, 156 to 176, and 189 to 209; these read FLQLLSCACIIFTVGMFTTGL, VQFLPFLTTCLNNLGWLYYGL, GTVIFVNIIGAFLQTVYIATY, LLMVSVLCVAWVYFSLVISPG, LGLTCSVFTISMYLSPLADLL, LSFSLTVATFFTSTSWTLYGL, and PGIFTSLIRFFLFWWFGAVIP. Residues 5–90 enclose the MtN3/slv 1 domain; sequence QLLSCACIIF…ATYCHYTKEK (86 aa). The 81-residue stretch at 124-204 folds into the MtN3/slv 2 domain; the sequence is QLGLTCSVFT…LIRFFLFWWF (81 aa).

This sequence belongs to the SWEET sugar transporter family.

It is found in the golgi apparatus membrane. Its subcellular location is the cell membrane. Its function is as follows. Mediates sugar transport across membranes. This chain is Sugar transporter SWEET1 (slc50a1), found in Danio rerio (Zebrafish).